We begin with the raw amino-acid sequence, 285 residues long: Diaminopimelate epimerase (285 aa).

Positions 14 and 67 each coordinate substrate. Residue cysteine 76 is the Proton donor of the active site. Residues 77–78 (GN), asparagine 166, asparagine 199, and 217–218 (ER) each bind substrate. Cysteine 226 serves as the catalytic Proton acceptor. 227-228 (GT) contributes to the substrate binding site.

Belongs to the diaminopimelate epimerase family. In terms of assembly, homodimer.

Its subcellular location is the cytoplasm. It catalyses the reaction (2S,6S)-2,6-diaminopimelate = meso-2,6-diaminopimelate. The protein operates within amino-acid biosynthesis; L-lysine biosynthesis via DAP pathway; DL-2,6-diaminopimelate from LL-2,6-diaminopimelate: step 1/1. Catalyzes the stereoinversion of LL-2,6-diaminopimelate (L,L-DAP) to meso-diaminopimelate (meso-DAP), a precursor of L-lysine and an essential component of the bacterial peptidoglycan. This is Diaminopimelate epimerase from Bacillus licheniformis (strain ATCC 14580 / DSM 13 / JCM 2505 / CCUG 7422 / NBRC 12200 / NCIMB 9375 / NCTC 10341 / NRRL NRS-1264 / Gibson 46).